The sequence spans 163 residues: uncharacterized protein (163 aa).

Belongs to the LcrH/SycD chaperone family.

This is an uncharacterized protein from Escherichia coli (strain K12).